A 430-amino-acid chain; its full sequence is Tektin-2 (430 aa).

Coiled coils occupy residues 80–162 (KCLT…FEQL) and 225–382 (NKDR…CKAN).

Belongs to the tektin family. In terms of assembly, microtubule inner protein component of sperm flagellar doublet microtubules. May interact with CCDC172. Post-translationally, tyrosine phosphorylated. Ubiquitinated, leading to its degradation. Deubiquitinated by USP16, promoting its stability. As to expression, expressed at high levels in testis, trachea and fetal lung, and at lower levels in ovary, pituitary, adult lung, fetal brain and fetal kidney.

The protein localises to the cytoplasm. It localises to the cytoskeleton. The protein resides in the cilium axoneme. Its subcellular location is the flagellum axoneme. It is found in the microtubule organizing center. Functionally, microtubule inner protein (MIP) part of the dynein-decorated doublet microtubules (DMTs) in cilia and flagellar axoneme. Plays a key role in the assembly or attachment of the inner dynein arm to microtubules in sperm flagella and tracheal cilia. Forms filamentous polymers in the walls of ciliary and flagellar microtubules. This chain is Tektin-2, found in Homo sapiens (Human).